The chain runs to 90 residues: Small ribosomal subunit protein uS15c (90 aa).

Belongs to the universal ribosomal protein uS15 family. Part of the 30S ribosomal subunit.

Its subcellular location is the plastid. It is found in the chloroplast. In Mesostigma viride (Green alga), this protein is Small ribosomal subunit protein uS15c (rps15).